A 163-amino-acid chain; its full sequence is Jun dimerization protein 2 (163 aa).

Disordered stretches follow at residues 1-20 (MMPG…PGLG) and 58-89 (GKRP…AARC). Residue Lys-65 forms a Glycyl lysine isopeptide (Lys-Gly) (interchain with G-Cter in SUMO2) linkage. Residues 72 to 135 (EERRKRRREK…QQLILMLNRH (64 aa)) form the bZIP domain. Residues 74 to 96 (RRKRRREKNKVAAARCRNKKKER) form a basic motif region. Residues 100 to 128 (LQRESERLELMNAELKTQIEELKQERQQL) form a leucine-zipper region. Thr-148 bears the Phosphothreonine; by MAPK8 mark.

It belongs to the bZIP family. ATF subfamily. Forms a homodimer or heterodimer with JUN, JUNB, JUND, CEBPG and ATF2 thereby inhibiting transactivation by JUN, ATF2 and CEBPG. Binds multiple DNA elements such as cAMP-response element (CRE) and TPA response element (TRE) either as homodimer or heterodimer. Interacts with IRF2BP1. Post-translationally, phosphorylation of Thr-148 by MAPK8 in response to different stress conditions such as, UV irradiation, oxidatives stress and anisomycin treatments. In terms of processing, polyubiquitinated; probably by IRF2BP1.

It is found in the nucleus. Component of the AP-1 transcription factor that represses transactivation mediated by the Jun family of proteins. Involved in a variety of transcriptional responses associated with AP-1 such as UV-induced apoptosis, cell differentiation, tumorigenesis and antitumogeneris. Can also function as a repressor by recruiting histone deacetylase 3/HDAC3 to the promoter region of JUN. May control transcription via direct regulation of the modification of histones and the assembly of chromatin. In Homo sapiens (Human), this protein is Jun dimerization protein 2 (JDP2).